A 301-amino-acid polypeptide reads, in one-letter code: Probable aspartoacylase (301 aa).

Zn(2+) is bound by residues histidine 13 and glutamate 16. Residues arginine 54 and asparagine 61–arginine 62 contribute to the substrate site. Histidine 105 contributes to the Zn(2+) binding site. Positions 163 and 273 each coordinate substrate.

Belongs to the AspA/AstE family. Aspartoacylase subfamily. Requires Zn(2+) as cofactor.

It catalyses the reaction an N-acyl-L-aspartate + H2O = a carboxylate + L-aspartate. This chain is Probable aspartoacylase, found in Prochlorococcus marinus (strain MIT 9301).